The following is a 159-amino-acid chain: Endoribonuclease YbeY (159 aa).

The Zn(2+) site is built by histidine 125, histidine 129, and histidine 135.

Belongs to the endoribonuclease YbeY family. Zn(2+) serves as cofactor.

It localises to the cytoplasm. In terms of biological role, single strand-specific metallo-endoribonuclease involved in late-stage 70S ribosome quality control and in maturation of the 3' terminus of the 16S rRNA. This chain is Endoribonuclease YbeY, found in Brevibacillus brevis (strain 47 / JCM 6285 / NBRC 100599).